The chain runs to 542 residues: Chaperonin GroEL 2 (542 aa).

Residues Thr30–Pro33, Lys51, Asp87–Thr91, Gly415, and Asp496 contribute to the ATP site.

It belongs to the chaperonin (HSP60) family. In terms of assembly, forms a cylinder of 14 subunits composed of two heptameric rings stacked back-to-back. Interacts with the co-chaperonin GroES.

Its subcellular location is the cytoplasm. It carries out the reaction ATP + H2O + a folded polypeptide = ADP + phosphate + an unfolded polypeptide.. Its function is as follows. Together with its co-chaperonin GroES, plays an essential role in assisting protein folding. The GroEL-GroES system forms a nano-cage that allows encapsulation of the non-native substrate proteins and provides a physical environment optimized to promote and accelerate protein folding. This Rhizobium etli (strain ATCC 51251 / DSM 11541 / JCM 21823 / NBRC 15573 / CFN 42) protein is Chaperonin GroEL 2.